We begin with the raw amino-acid sequence, 244 residues long: MTRKTDDIFAAPLQEMIDFKFDERVVAVFPDMIQRSVPGYGMIISNIGILAAKYAQPGSHCYDLGCSLGAATLSMRQRISQRDCDIIAVDNSPAMIERGRELLARDSQPTVPVTLICADIQSVVIENASVVVLNFTLQFIPPEQRLALIKRIHAGLRPGGILILSEKIAFSEPARQHFHVEMHHDFKRANGYSDLEISQKRSALENVMIPETVACHKERLQEAGFSSSELWFQCFNFASMVAFK.

Residues Tyr40, 65 to 67 (GCS), 90 to 91 (DN), 119 to 120 (DI), Asn134, and Arg201 contribute to the S-adenosyl-L-methionine site.

This sequence belongs to the class I-like SAM-binding methyltransferase superfamily. Cx-SAM synthase family. Homodimer.

The enzyme catalyses prephenate + S-adenosyl-L-methionine = carboxy-S-adenosyl-L-methionine + 3-phenylpyruvate + H2O. Functionally, catalyzes the conversion of S-adenosyl-L-methionine (SAM) to carboxy-S-adenosyl-L-methionine (Cx-SAM). This Geobacter sp. (strain M21) protein is Carboxy-S-adenosyl-L-methionine synthase.